We begin with the raw amino-acid sequence, 339 residues long: O-methyltransferase 7 (339 aa).

Positions 186, 209, 232, 233, and 246 each coordinate S-adenosyl-L-methionine. His-250 acts as the Proton acceptor in catalysis.

The protein belongs to the class I-like SAM-binding methyltransferase superfamily. Cation-independent O-methyltransferase family. COMT subfamily.

It catalyses the reaction (3,5-dichloro-2,4,6-trihydroxyphenyl)hexan-1-one + S-adenosyl-L-methionine = 1-(3,5-dichloro-2,6-dihydroxy-4-methoxyphenyl)hexan-1-one + S-adenosyl-L-homocysteine + H(+). In Dictyostelium discoideum (Social amoeba), this protein is O-methyltransferase 7 (omt7).